The primary structure comprises 254 residues: Demethylmenaquinone methyltransferase (254 aa).

Residues T62, D80, 122–123 (DG), and S139 contribute to the S-adenosyl-L-methionine site.

This sequence belongs to the class I-like SAM-binding methyltransferase superfamily. MenG/UbiE family.

The catalysed reaction is a 2-demethylmenaquinol + S-adenosyl-L-methionine = a menaquinol + S-adenosyl-L-homocysteine + H(+). It functions in the pathway quinol/quinone metabolism; menaquinone biosynthesis; menaquinol from 1,4-dihydroxy-2-naphthoate: step 2/2. Functionally, methyltransferase required for the conversion of demethylmenaquinol (DMKH2) to menaquinol (MKH2). This chain is Demethylmenaquinone methyltransferase, found in Parafrankia sp. (strain EAN1pec).